Consider the following 181-residue polypeptide: CAPA peptides (181 aa).

An N-terminal signal peptide occupies residues 1 to 22; the sequence is MQDNRFFILMILLVFSTSLNQG. A propeptide spanning residues 23 to 29 is cleaved from the precursor; it reads QKLKAND. The residue at position 41 (Ile41) is an Isoleucine amide. Positions 44–54 are excised as a propeptide; the sequence is NSEISSFSRSE. Ile65 carries the isoleucine amide modification. The propeptide occupies 68 to 181; the sequence is SDVSSFDNLN…ENERDTANFL (114 aa). The tract at residues 159 to 181 is disordered; that stretch reads TQGQGGYTPRLGRENERDTANFL. Basic and acidic residues predominate over residues 169-181; it reads LGRENERDTANFL.

Post-translationally, a pyrokinin potentially constituted by residues Asn-158 to Gly-170 has so far not been detected and might be completely absent in ants. Periviscerokinin 1 and 2 are expressed in central brain, antennal lobes and gnathal, thoracic and abominal ganglia. Periviscerokinin 2 is also expressed in the retrocerebral complex (at protein level).

The protein resides in the secreted. Periviscerokinins mediate visceral muscle contractile activity (myotropic activity). The sequence is that of CAPA peptides from Camponotus floridanus (Florida carpenter ant).